A 216-amino-acid polypeptide reads, in one-letter code: DDB1- and CUL4-associated factor 16 (216 aa).

The disordered stretch occupies residues 1-42 (MGPRNPSPDHLSESESEEEENISYLNESSGEEWDSSEEEDSM). Residues 29–41 (SGEEWDSSEEEDS) show a composition bias toward acidic residues. Lys61 bears the N6-acetyllysine mark.

In terms of assembly, interacts with DDB1 and CUL4A.

The protein localises to the nucleus. It functions in the pathway protein modification; protein ubiquitination. In terms of biological role, functions as a substrate recognition component for CUL4-DDB1 E3 ubiquitin-protein ligase complex, which mediates ubiquitination and proteasome-dependent degradation of nuclear proteins. The protein is DDB1- and CUL4-associated factor 16 of Homo sapiens (Human).